A 230-amino-acid chain; its full sequence is Probable septum site-determining protein MinC (230 aa).

Belongs to the MinC family. Interacts with MinD and FtsZ.

Its function is as follows. Cell division inhibitor that blocks the formation of polar Z ring septums. Rapidly oscillates between the poles of the cell to destabilize FtsZ filaments that have formed before they mature into polar Z rings. Prevents FtsZ polymerization. The protein is Probable septum site-determining protein MinC of Rhodopseudomonas palustris (strain BisA53).